A 428-amino-acid chain; its full sequence is MTTLRKLPIALAVAAGVLSTQAMAVDFHGYARSGIGWTGSGGEQQCFKTTGAQSKYRLGNECETYAELKLGQELWKEGDKSFYLDTNVAYSVSQRDDWESTDPAFREANVQGKNLIESLPGSTMWAGKRFYQRHDVHMIDFYYWDISGPGAGLEAIDLGFGKLSVAATRNSEAGGSSAWINNQRKDADKTINDVYDIRLAGLETNPGGSLEFGVDYGRANTQDDYSLAPNASKDGVLLTAEHTQSMMGGFNKFVVQYATDSMTSWNSGHSQGTSVNNNGHMLRVIDHGAINLAEKWDMMYVALYQDTDWDNNNGTTWYSVGVRPMYKWTPIMSTLLEAGYDNVKSQRTGDRNGQYKLTLAQQWQAGDSIWSRPAIRVFATYANWDEKWGYNNVDKSPDNGLAQNGTIGTDSRGKSNEVTFGAQFEAWW.

The first 24 residues, 1-24 (MTTLRKLPIALAVAAGVLSTQAMA), serve as a signal peptide directing secretion.

The protein belongs to the porin LamB (TC 1.B.3) family. Homotrimer formed of three 18-stranded antiparallel beta-barrels, containing three independent channels.

It is found in the cell outer membrane. It carries out the reaction beta-maltose(in) = beta-maltose(out). Its function is as follows. Involved in the transport of maltose and maltodextrins. The sequence is that of Maltoporin from Yersinia enterocolitica serotype O:8 / biotype 1B (strain NCTC 13174 / 8081).